Reading from the N-terminus, the 90-residue chain is Probable Fe(2+)-trafficking protein (90 aa).

The protein belongs to the Fe(2+)-trafficking protein family.

Functionally, could be a mediator in iron transactions between iron acquisition and iron-requiring processes, such as synthesis and/or repair of Fe-S clusters in biosynthetic enzymes. This chain is Probable Fe(2+)-trafficking protein, found in Saccharophagus degradans (strain 2-40 / ATCC 43961 / DSM 17024).